Consider the following 128-residue polypeptide: Sulfurtransferase TusD (128 aa).

The Cysteine persulfide intermediate role is filled by Cys78.

This sequence belongs to the DsrE/TusD family. In terms of assembly, heterohexamer, formed by a dimer of trimers. The hexameric TusBCD complex contains 2 copies each of TusB, TusC and TusD. The TusBCD complex interacts with TusE.

It is found in the cytoplasm. Its function is as follows. Part of a sulfur-relay system required for 2-thiolation of 5-methylaminomethyl-2-thiouridine (mnm(5)s(2)U) at tRNA wobble positions. Accepts sulfur from TusA and transfers it in turn to TusE. The sequence is that of Sulfurtransferase TusD from Salmonella arizonae (strain ATCC BAA-731 / CDC346-86 / RSK2980).